A 43-amino-acid chain; its full sequence is Protein PsbN (43 aa).

Residues 5–27 traverse the membrane as a helical segment; it reads TLVAISISGLLVSFTGYALYTAF.

Belongs to the PsbN family.

Its subcellular location is the plastid. It is found in the chloroplast thylakoid membrane. May play a role in photosystem I and II biogenesis. The chain is Protein PsbN from Eucalyptus globulus subsp. globulus (Tasmanian blue gum).